The chain runs to 497 residues: Guanosine-5'-triphosphate,3'-diphosphate pyrophosphatase (497 aa).

It belongs to the GppA/Ppx family. GppA subfamily.

The enzyme catalyses guanosine 3'-diphosphate 5'-triphosphate + H2O = guanosine 3',5'-bis(diphosphate) + phosphate + H(+). Its pathway is purine metabolism; ppGpp biosynthesis; ppGpp from GTP: step 2/2. Its function is as follows. Catalyzes the conversion of pppGpp to ppGpp. Guanosine pentaphosphate (pppGpp) is a cytoplasmic signaling molecule which together with ppGpp controls the 'stringent response', an adaptive process that allows bacteria to respond to amino acid starvation, resulting in the coordinated regulation of numerous cellular activities. This is Guanosine-5'-triphosphate,3'-diphosphate pyrophosphatase from Vibrio parahaemolyticus serotype O3:K6 (strain RIMD 2210633).